The primary structure comprises 157 residues: Large ribosomal subunit protein uL11 (157 aa).

Disordered stretches follow at residues 1–28 (MAGTIEVLIPGGEANPGPPLGPELGPTP) and 138–157 (NNPREFKSRMEDGEYDDILK). Positions 139-157 (NPREFKSRMEDGEYDDILK) are enriched in basic and acidic residues.

Belongs to the universal ribosomal protein uL11 family. In terms of assembly, part of the ribosomal stalk of the 50S ribosomal subunit. Interacts with L10 and the large rRNA to form the base of the stalk. L10 forms an elongated spine to which L12 dimers bind in a sequential fashion forming a multimeric L10(L12)X complex.

Its function is as follows. Forms part of the ribosomal stalk which helps the ribosome interact with GTP-bound translation factors. The protein is Large ribosomal subunit protein uL11 of Haloquadratum walsbyi (strain DSM 16790 / HBSQ001).